The following is a 704-amino-acid chain: Ion-translocating oxidoreductase complex subunit C (704 aa).

2 4Fe-4S ferredoxin-type domains span residues 368 to 397 and 407 to 436; these read MGAP…QQLY and KATA…VQYF. 8 residues coordinate [4Fe-4S] cluster: C377, C380, C383, C387, C416, C419, C422, and C426. The disordered stretch occupies residues 536–685; the sequence is RAKQAAHPMA…ADPRKAAVAA (150 aa). The span at 556–565 shows a compositional bias: low complexity; sequence KAAVEAAIAR.

Belongs to the 4Fe4S bacterial-type ferredoxin family. RnfC subfamily. In terms of assembly, the complex is composed of six subunits: RsxA, RsxB, RsxC, RsxD, RsxE and RsxG. [4Fe-4S] cluster serves as cofactor.

The protein resides in the cell inner membrane. Functionally, part of a membrane-bound complex that couples electron transfer with translocation of ions across the membrane. Required to maintain the reduced state of SoxR. The protein is Ion-translocating oxidoreductase complex subunit C of Salmonella dublin (strain CT_02021853).